Here is a 317-residue protein sequence, read N- to C-terminus: Proline iminopeptidase (317 aa).

The AB hydrolase-1 domain occupies valine 41–histidine 296. Serine 113 acts as the Nucleophile in catalysis. Residue aspartate 268 is part of the active site. The active-site Proton donor is the histidine 296.

It belongs to the peptidase S33 family. As to quaternary structure, monomer.

It localises to the cytoplasm. It carries out the reaction Release of N-terminal proline from a peptide.. In terms of biological role, specifically catalyzes the removal of N-terminal proline residues from peptides. This Serratia marcescens protein is Proline iminopeptidase (pip).